Reading from the N-terminus, the 262-residue chain is Acyl-[acyl-carrier-protein]--UDP-N-acetylglucosamine O-acyltransferase (262 aa).

The protein belongs to the transferase hexapeptide repeat family. LpxA subfamily. Homotrimer.

It localises to the cytoplasm. The enzyme catalyses a (3R)-hydroxyacyl-[ACP] + UDP-N-acetyl-alpha-D-glucosamine = a UDP-3-O-[(3R)-3-hydroxyacyl]-N-acetyl-alpha-D-glucosamine + holo-[ACP]. The protein operates within glycolipid biosynthesis; lipid IV(A) biosynthesis; lipid IV(A) from (3R)-3-hydroxytetradecanoyl-[acyl-carrier-protein] and UDP-N-acetyl-alpha-D-glucosamine: step 1/6. Functionally, involved in the biosynthesis of lipid A, a phosphorylated glycolipid that anchors the lipopolysaccharide to the outer membrane of the cell. The polypeptide is Acyl-[acyl-carrier-protein]--UDP-N-acetylglucosamine O-acyltransferase (Escherichia coli O157:H7).